Reading from the N-terminus, the 190-residue chain is dCTP deaminase (190 aa).

DCTP-binding positions include 113–118 (KSTYAR), 137–139 (TLE), glutamine 158, tyrosine 172, and glutamine 182. Glutamate 139 functions as the Proton donor/acceptor in the catalytic mechanism.

It belongs to the dCTP deaminase family. Homotrimer.

The catalysed reaction is dCTP + H2O + H(+) = dUTP + NH4(+). It functions in the pathway pyrimidine metabolism; dUMP biosynthesis; dUMP from dCTP (dUTP route): step 1/2. Its function is as follows. Catalyzes the deamination of dCTP to dUTP. The polypeptide is dCTP deaminase (Chromobacterium violaceum (strain ATCC 12472 / DSM 30191 / JCM 1249 / CCUG 213 / NBRC 12614 / NCIMB 9131 / NCTC 9757 / MK)).